A 318-amino-acid chain; its full sequence is NADH-ubiquinone oxidoreductase chain 1 (318 aa).

A run of 8 helical transmembrane segments spans residues 3 to 23, 68 to 88, 102 to 122, 146 to 166, 171 to 191, 222 to 242, 253 to 273, and 294 to 314; these read FVNL…LTLL, LILF…MWIP, ILFM…SGWA, LAII…STLI, HIWL…STLA, LFFL…TILF, EMYT…FLWI, and LPLT…LASI.

Belongs to the complex I subunit 1 family.

Its subcellular location is the mitochondrion inner membrane. The catalysed reaction is a ubiquinone + NADH + 5 H(+)(in) = a ubiquinol + NAD(+) + 4 H(+)(out). Core subunit of the mitochondrial membrane respiratory chain NADH dehydrogenase (Complex I) that is believed to belong to the minimal assembly required for catalysis. Complex I functions in the transfer of electrons from NADH to the respiratory chain. The immediate electron acceptor for the enzyme is believed to be ubiquinone. This chain is NADH-ubiquinone oxidoreductase chain 1 (MT-ND1), found in Nyctalus plancyi velutinus (Fine-haired noctule).